The sequence spans 275 residues: Phosphonoacetaldehyde hydrolase (275 aa).

The Nucleophile role is filled by D15. Mg(2+) contacts are provided by D15 and A17. Catalysis depends on K56, which acts as the Schiff-base intermediate with substrate. D189 provides a ligand contact to Mg(2+).

This sequence belongs to the HAD-like hydrolase superfamily. PhnX family. Homodimer. Mg(2+) serves as cofactor.

It catalyses the reaction phosphonoacetaldehyde + H2O = acetaldehyde + phosphate + H(+). In terms of biological role, involved in phosphonate degradation. This is Phosphonoacetaldehyde hydrolase from Pseudomonas aeruginosa (strain UCBPP-PA14).